Reading from the N-terminus, the 576-residue chain is K(+)/H(+) antiporter NhaP2 (576 aa).

Transmembrane regions (helical) follow at residues 6-26 (INSFFLIGALLTAVSVLLSPM), 34-54 (ILLIFLAVGILAGEDGPGGIL), 58-78 (YSTAYLVSNLALAIILLDGGM), 87-107 (VALWPALSLATFGVAITTSIT), 109-129 (MMAAWLFDLHWLQGLLVGAIV), 163-183 (PMAVFLTVTLIAILANVDTEM), 185-205 (FSFMFISFIKQFGLGICLGLG), 219-239 (LADGLYSILVLSGGLIIYAAS), 242-262 (LGGSGILSIYLVGLFLGNKPT), 271-291 (VLDGMTWVSQIGMFLVLGLLL), 299-319 (ILIPGFALAFGMILFARPVAV), 335-355 (WFISWVGLRGAVPIILAVFPM), and 359-379 (LPGAQLYFNLAFFVVLVSLLV). The 82-residue stretch at 405–486 (SGVEIYPSSE…LEALSNLFSQ (82 aa)) folds into the RCK C-terminal domain.

It belongs to the monovalent cation:proton antiporter 1 (CPA1) transporter (TC 2.A.36) family. NhaP2 subfamily.

The protein localises to the cell inner membrane. It catalyses the reaction K(+)(in) + H(+)(out) = K(+)(out) + H(+)(in). In terms of biological role, k(+)/H(+) antiporter that extrudes potassium in exchange for external protons and maintains the internal concentration of potassium under toxic levels. The chain is K(+)/H(+) antiporter NhaP2 from Shewanella baltica (strain OS155 / ATCC BAA-1091).